A 551-amino-acid chain; its full sequence is mRNA cap guanine-N(7) methyltransferase (551 aa).

Residues 1–10 show a composition bias toward polar residues; that stretch reads MENRSSSGTP. A disordered region spans residues 1 to 152; that stretch reads MENRSSSGTP…DRETLRRRQE (152 aa). Basic and acidic residues-rich tracts occupy residues 48–76 and 141–152; these read VTEE…EERH and LVDRETLRRRQE. An mRNA cap 0 methyltransferase domain is found at 194 to 551; that stretch reads SKIKGLRSFN…FYHAFCFYKV (358 aa). Residue 203-204 coordinates mRNA; that stretch reads NN. S-adenosyl-L-methionine-binding positions include lysine 207, glycine 250, aspartate 274, aspartate 312, 355–357, and tyrosine 360; that span reads MFA. Residues 407–430 form a disordered region; it reads KAREEQEKKEKSDEAPEDGEVEED. A compositionally biased stretch (basic and acidic residues) spans 408–420; sequence AREEQEKKEKSDE. The segment covering 421–430 has biased composition (acidic residues); the sequence is APEDGEVEED.

The protein belongs to the class I-like SAM-binding methyltransferase superfamily. mRNA cap 0 methyltransferase family.

The protein localises to the nucleus. The enzyme catalyses a 5'-end (5'-triphosphoguanosine)-ribonucleoside in mRNA + S-adenosyl-L-methionine = a 5'-end (N(7)-methyl 5'-triphosphoguanosine)-ribonucleoside in mRNA + S-adenosyl-L-homocysteine. Responsible for methylating the 5'-cap structure of mRNAs. This Aspergillus clavatus (strain ATCC 1007 / CBS 513.65 / DSM 816 / NCTC 3887 / NRRL 1 / QM 1276 / 107) protein is mRNA cap guanine-N(7) methyltransferase (abd1).